The chain runs to 229 residues: Thiamine-phosphate synthase (229 aa).

Residues 38 to 42 (QFREK) and Asn73 contribute to the 4-amino-2-methyl-5-(diphosphooxymethyl)pyrimidine site. Asp74 and Asp93 together coordinate Mg(2+). Ser111 lines the 4-amino-2-methyl-5-(diphosphooxymethyl)pyrimidine pocket. 137 to 139 (TLS) is a 2-[(2R,5Z)-2-carboxy-4-methylthiazol-5(2H)-ylidene]ethyl phosphate binding site. Lys140 contacts 4-amino-2-methyl-5-(diphosphooxymethyl)pyrimidine. Residues Gly169 and 189–190 (IS) contribute to the 2-[(2R,5Z)-2-carboxy-4-methylthiazol-5(2H)-ylidene]ethyl phosphate site.

The protein belongs to the thiamine-phosphate synthase family. The cofactor is Mg(2+).

It carries out the reaction 2-[(2R,5Z)-2-carboxy-4-methylthiazol-5(2H)-ylidene]ethyl phosphate + 4-amino-2-methyl-5-(diphosphooxymethyl)pyrimidine + 2 H(+) = thiamine phosphate + CO2 + diphosphate. The enzyme catalyses 2-(2-carboxy-4-methylthiazol-5-yl)ethyl phosphate + 4-amino-2-methyl-5-(diphosphooxymethyl)pyrimidine + 2 H(+) = thiamine phosphate + CO2 + diphosphate. The catalysed reaction is 4-methyl-5-(2-phosphooxyethyl)-thiazole + 4-amino-2-methyl-5-(diphosphooxymethyl)pyrimidine + H(+) = thiamine phosphate + diphosphate. The protein operates within cofactor biosynthesis; thiamine diphosphate biosynthesis; thiamine phosphate from 4-amino-2-methyl-5-diphosphomethylpyrimidine and 4-methyl-5-(2-phosphoethyl)-thiazole: step 1/1. Condenses 4-methyl-5-(beta-hydroxyethyl)thiazole monophosphate (THZ-P) and 2-methyl-4-amino-5-hydroxymethyl pyrimidine pyrophosphate (HMP-PP) to form thiamine monophosphate (TMP). This Streptococcus suis (strain 98HAH33) protein is Thiamine-phosphate synthase.